Consider the following 60-residue polypeptide: Large ribosomal subunit protein uL30 (60 aa).

It belongs to the universal ribosomal protein uL30 family. Part of the 50S ribosomal subunit.

The polypeptide is Large ribosomal subunit protein uL30 (Desulfitobacterium hafniense (strain DSM 10664 / DCB-2)).